We begin with the raw amino-acid sequence, 485 residues long: Aspartyl/glutamyl-tRNA(Asn/Gln) amidotransferase subunit B (485 aa).

It belongs to the GatB/GatE family. GatB subfamily. Heterotrimer of A, B and C subunits.

The catalysed reaction is L-glutamyl-tRNA(Gln) + L-glutamine + ATP + H2O = L-glutaminyl-tRNA(Gln) + L-glutamate + ADP + phosphate + H(+). It carries out the reaction L-aspartyl-tRNA(Asn) + L-glutamine + ATP + H2O = L-asparaginyl-tRNA(Asn) + L-glutamate + ADP + phosphate + 2 H(+). Allows the formation of correctly charged Asn-tRNA(Asn) or Gln-tRNA(Gln) through the transamidation of misacylated Asp-tRNA(Asn) or Glu-tRNA(Gln) in organisms which lack either or both of asparaginyl-tRNA or glutaminyl-tRNA synthetases. The reaction takes place in the presence of glutamine and ATP through an activated phospho-Asp-tRNA(Asn) or phospho-Glu-tRNA(Gln). This chain is Aspartyl/glutamyl-tRNA(Asn/Gln) amidotransferase subunit B, found in Borrelia recurrentis (strain A1).